A 540-amino-acid polypeptide reads, in one-letter code: O-phosphoserine--tRNA(Cys) ligase (540 aa).

Residues 188–190, 233–235, 275–276, and Asn-319 each bind substrate; these read HMT, SAS, and YY.

It belongs to the class-II aminoacyl-tRNA synthetase family. O-phosphoseryl-tRNA(Cys) synthetase subfamily. In terms of assembly, homotetramer. Interacts with SepCysS.

It catalyses the reaction tRNA(Cys) + O-phospho-L-serine + ATP = O-phospho-L-seryl-tRNA(Cys) + AMP + diphosphate. Functionally, catalyzes the attachment of O-phosphoserine (Sep) to tRNA(Cys). The polypeptide is O-phosphoserine--tRNA(Cys) ligase (Methanococcus aeolicus (strain ATCC BAA-1280 / DSM 17508 / OCM 812 / Nankai-3)).